We begin with the raw amino-acid sequence, 237 residues long: 7-carboxy-7-deazaguanine synthase (237 aa).

Substrate is bound by residues 15 to 17 (LSG) and R30. The region spanning 21–233 (STGIPTIFVR…IQTHKYIWGD (213 aa)) is the Radical SAM core domain. Positions 34, 38, and 48 each coordinate [4Fe-4S] cluster. T50 contributes to the Mg(2+) binding site. T84 lines the substrate pocket. S-adenosyl-L-methionine is bound at residue G86.

Belongs to the radical SAM superfamily. 7-carboxy-7-deazaguanine synthase family. In terms of assembly, homodimer. [4Fe-4S] cluster serves as cofactor. S-adenosyl-L-methionine is required as a cofactor. Requires Mg(2+) as cofactor.

It carries out the reaction 6-carboxy-5,6,7,8-tetrahydropterin + H(+) = 7-carboxy-7-deazaguanine + NH4(+). The protein operates within purine metabolism; 7-cyano-7-deazaguanine biosynthesis. In terms of biological role, catalyzes the complex heterocyclic radical-mediated conversion of 6-carboxy-5,6,7,8-tetrahydropterin (CPH4) to 7-carboxy-7-deazaguanine (CDG), a step common to the biosynthetic pathways of all 7-deazapurine-containing compounds. The chain is 7-carboxy-7-deazaguanine synthase from Leptospira interrogans serogroup Icterohaemorrhagiae serovar Lai (strain 56601).